Reading from the N-terminus, the 189-residue chain is T cell receptor gamma constant 2 (189 aa).

In terms of domain architecture, Ig-like spans 10–104 (PKPTIFLPSI…NKNGIDQEII (95 aa)). A disulfide bridge links C32 with C88. Residues N66, N120, N136, N142, and N151 are each glycosylated (N-linked (GlcNAc...) asparagine). A helical transmembrane segment spans residues 155-177 (YYTYLLLLLKSVVYFAIITCCLL).

As to quaternary structure, gamma-delta TR is a heterodimer composed of a gamma and delta chain; disulfide-linked. The gamma-delta TR is associated with the transmembrane signaling CD3 coreceptor proteins following the stoichiometry: a single gamma-delta TR heterodimer associates with one CD3D-CD3E heterodimer, one CD3G-CD3E heterodimer and one CD247 homodimer forming a stable octameric structure. Upon activation, gamma-delta TR complex associates with FCER1G to initiate intracellular signaling.

It localises to the cell membrane. Constant region of T cell receptor (TR) gamma chain that participates in the antigen recognition. Gamma-delta TRs recognize a variety of self and foreign non-peptide antigens frequently expressed at the epithelial boundaries between the host and external environment, including endogenous lipids presented by MH-like protein CD1D and phosphoantigens presented by butyrophilin-like molecule BTN3A1. Upon antigen recognition induces rapid, innate-like immune responses involved in pathogen clearance and tissue repair. Binding of gamma-delta TR complex to antigen triggers phosphorylation of immunoreceptor tyrosine-based activation motifs (ITAMs) in the CD3 chains by the LCK and FYN kinases, allowing the recruitment, phosphorylation, and activation of ZAP70 that facilitates phosphorylation of the scaffolding proteins LCP2 and LAT. This lead to the formation of a supramolecular signalosome that recruits the phospholipase PLCG1, resulting in calcium mobilization and ERK activation, ultimately leading to T cell expansion and differentiation into effector cells. Gamma-delta TRs are produced through somatic rearrangement of a limited repertoire of variable (V), diversity (D), and joining (J) genes. The potential diversity of gamma-delta TRs is conferred by the unique ability to rearrange (D) genes in tandem and to utilize all three reading frames. The combinatorial diversity is considerably increased by the sequence exonuclease trimming and random nucleotide (N) region additions which occur during the V-(D)-J rearrangements. This Homo sapiens (Human) protein is T cell receptor gamma constant 2.